A 394-amino-acid chain; its full sequence is WAT1-related protein At2g40900 (394 aa).

10 helical membrane-spanning segments follow: residues Phe-13–Leu-33, Tyr-40–Leu-60, Ser-67–Ile-87, Thr-102–Phe-122, Leu-142–Phe-162, Ala-180–Ala-200, Leu-209–Val-229, Leu-245–Leu-265, Val-273–Val-293, and Ile-298–Trp-318. 2 EamA domains span residues Tyr-22–Gly-147 and Leu-189–Leu-317.

Belongs to the drug/metabolite transporter (DMT) superfamily. Plant drug/metabolite exporter (P-DME) (TC 2.A.7.4) family.

It localises to the membrane. The protein is WAT1-related protein At2g40900 of Arabidopsis thaliana (Mouse-ear cress).